A 158-amino-acid chain; its full sequence is MIRRATIVAVGRLRGWAAEGCEDYLRRLRRYFPVEVIEVAEADMNRLGRGEALREEAGRLLRRLPADAHVVALDRKTGRRYGSEELARRRLEPLAVSGRGHVAFVIGGPLGLAPEVLERADERWSFGEITLPHALARVVLLEQLYRAVKILRGERYHW.

S-adenosyl-L-methionine is bound by residues leucine 73, glycine 107, and 126-131 (FGEITL).

This sequence belongs to the RNA methyltransferase RlmH family. As to quaternary structure, homodimer.

The protein localises to the cytoplasm. It catalyses the reaction pseudouridine(1915) in 23S rRNA + S-adenosyl-L-methionine = N(3)-methylpseudouridine(1915) in 23S rRNA + S-adenosyl-L-homocysteine + H(+). Functionally, specifically methylates the pseudouridine at position 1915 (m3Psi1915) in 23S rRNA. This is Ribosomal RNA large subunit methyltransferase H from Rubrobacter xylanophilus (strain DSM 9941 / JCM 11954 / NBRC 16129 / PRD-1).